We begin with the raw amino-acid sequence, 355 residues long: Phospho-N-acetylmuramoyl-pentapeptide-transferase (355 aa).

A run of 10 helical transmembrane segments spans residues 14 to 34, 40 to 60, 84 to 104, 107 to 127, 147 to 167, 176 to 196, 205 to 225, 227 to 247, 268 to 290, and 334 to 354; these read PTGTHLLILLTGLLFLLVVFF, LLIPLMATTLISAGLGCQVVP, GTPTMGGSFFVPVALIFALIW, FTPNVVAVALLTFVYMGIGWL, LILQITGAVLFCLWMLVNQVS, LVIPLGFFFWILAGFVLVAES, VDGLAGGTGAIAFLGLGIIIA, SHPDLAIFCTCFAGACLGFIF, ALAAVGLIAGHLWGLFLISGLFF, and TKIVGAFYLVNALLVVLAIWS.

The protein belongs to the glycosyltransferase 4 family. MraY subfamily. The cofactor is Mg(2+).

The protein localises to the cell inner membrane. It catalyses the reaction UDP-N-acetyl-alpha-D-muramoyl-L-alanyl-gamma-D-glutamyl-meso-2,6-diaminopimeloyl-D-alanyl-D-alanine + di-trans,octa-cis-undecaprenyl phosphate = di-trans,octa-cis-undecaprenyl diphospho-N-acetyl-alpha-D-muramoyl-L-alanyl-D-glutamyl-meso-2,6-diaminopimeloyl-D-alanyl-D-alanine + UMP. It functions in the pathway cell wall biogenesis; peptidoglycan biosynthesis. In terms of biological role, catalyzes the initial step of the lipid cycle reactions in the biosynthesis of the cell wall peptidoglycan: transfers peptidoglycan precursor phospho-MurNAc-pentapeptide from UDP-MurNAc-pentapeptide onto the lipid carrier undecaprenyl phosphate, yielding undecaprenyl-pyrophosphoryl-MurNAc-pentapeptide, known as lipid I. The chain is Phospho-N-acetylmuramoyl-pentapeptide-transferase from Microcystis aeruginosa (strain NIES-843 / IAM M-2473).